We begin with the raw amino-acid sequence, 161 residues long: Protein-export protein SecB (161 aa).

It belongs to the SecB family. In terms of assembly, homotetramer, a dimer of dimers. One homotetramer interacts with 1 SecA dimer.

The protein resides in the cytoplasm. One of the proteins required for the normal export of preproteins out of the cell cytoplasm. It is a molecular chaperone that binds to a subset of precursor proteins, maintaining them in a translocation-competent state. It also specifically binds to its receptor SecA. The chain is Protein-export protein SecB from Rhodopseudomonas palustris (strain BisA53).